A 486-amino-acid polypeptide reads, in one-letter code: Probable glycine dehydrogenase (decarboxylating) subunit 2 (486 aa).

Residue Lys269 is modified to N6-(pyridoxal phosphate)lysine.

It belongs to the GcvP family. C-terminal subunit subfamily. As to quaternary structure, the glycine cleavage system is composed of four proteins: P, T, L and H. In this organism, the P 'protein' is a heterodimer of two subunits. Pyridoxal 5'-phosphate serves as cofactor.

The catalysed reaction is N(6)-[(R)-lipoyl]-L-lysyl-[glycine-cleavage complex H protein] + glycine + H(+) = N(6)-[(R)-S(8)-aminomethyldihydrolipoyl]-L-lysyl-[glycine-cleavage complex H protein] + CO2. Functionally, the glycine cleavage system catalyzes the degradation of glycine. The P protein binds the alpha-amino group of glycine through its pyridoxal phosphate cofactor; CO(2) is released and the remaining methylamine moiety is then transferred to the lipoamide cofactor of the H protein. This is Probable glycine dehydrogenase (decarboxylating) subunit 2 from Chlorobaculum tepidum (strain ATCC 49652 / DSM 12025 / NBRC 103806 / TLS) (Chlorobium tepidum).